The primary structure comprises 64 residues: Putative neurotoxin-H (64 aa).

The first 19 residues, 1–19 (MYATVTVTVLLLISSGIFC), serve as a signal peptide directing secretion. Intrachain disulfides connect C25-C45, C32-C54, and C36-C56.

In terms of tissue distribution, expressed by the venom gland.

The protein resides in the secreted. The polypeptide is Putative neurotoxin-H (Lychas mucronatus (Chinese swimming scorpion)).